A 122-amino-acid polypeptide reads, in one-letter code: Small ribosomal subunit protein uS13 (122 aa).

Residues 94–122 are disordered; the sequence is KKLPVRGQRTHTNARTRKGPAKPIAGKKK.

This sequence belongs to the universal ribosomal protein uS13 family. In terms of assembly, part of the 30S ribosomal subunit. Forms a loose heterodimer with protein S19. Forms two bridges to the 50S subunit in the 70S ribosome.

Functionally, located at the top of the head of the 30S subunit, it contacts several helices of the 16S rRNA. In the 70S ribosome it contacts the 23S rRNA (bridge B1a) and protein L5 of the 50S subunit (bridge B1b), connecting the 2 subunits; these bridges are implicated in subunit movement. Contacts the tRNAs in the A and P-sites. In Hyphomonas neptunium (strain ATCC 15444), this protein is Small ribosomal subunit protein uS13.